We begin with the raw amino-acid sequence, 301 residues long: Probable alpha-L-glutamate ligase (301 aa).

The ATP-grasp domain occupies 104-287 (LQLLSRRGIG…VAGMIIEHLE (184 aa)). Residues K141, 178–179 (EY), D187, and 211–213 (RSN) each bind ATP. Mg(2+)-binding residues include D248, E260, and N262. Mn(2+)-binding residues include D248, E260, and N262.

It belongs to the RimK family. Mg(2+) serves as cofactor. The cofactor is Mn(2+).

This is Probable alpha-L-glutamate ligase from Pseudomonas putida (strain ATCC 700007 / DSM 6899 / JCM 31910 / BCRC 17059 / LMG 24140 / F1).